Reading from the N-terminus, the 264-residue chain is Thymidylate synthase (264 aa).

R21 contributes to the dUMP binding site. (6R)-5,10-methylene-5,6,7,8-tetrahydrofolate is bound at residue H51. 126–127 (RR) serves as a coordination point for dUMP. C146 serves as the catalytic Nucleophile. Residues 166 to 169 (RSVD), N177, and 207 to 209 (HLY) each bind dUMP. D169 provides a ligand contact to (6R)-5,10-methylene-5,6,7,8-tetrahydrofolate. A (6R)-5,10-methylene-5,6,7,8-tetrahydrofolate-binding site is contributed by A263.

This sequence belongs to the thymidylate synthase family. Bacterial-type ThyA subfamily. As to quaternary structure, homodimer.

The protein resides in the cytoplasm. The catalysed reaction is dUMP + (6R)-5,10-methylene-5,6,7,8-tetrahydrofolate = 7,8-dihydrofolate + dTMP. Its pathway is pyrimidine metabolism; dTTP biosynthesis. Catalyzes the reductive methylation of 2'-deoxyuridine-5'-monophosphate (dUMP) to 2'-deoxythymidine-5'-monophosphate (dTMP) while utilizing 5,10-methylenetetrahydrofolate (mTHF) as the methyl donor and reductant in the reaction, yielding dihydrofolate (DHF) as a by-product. This enzymatic reaction provides an intracellular de novo source of dTMP, an essential precursor for DNA biosynthesis. The sequence is that of Thymidylate synthase from Geobacillus kaustophilus (strain HTA426).